We begin with the raw amino-acid sequence, 422 residues long: Glutamyl-tRNA reductase (422 aa).

Substrate-binding positions include 50 to 53, S110, 115 to 117, and Q121; these read TCNR and ETQ. C51 acts as the Nucleophile in catalysis. 190–195 contacts NADP(+); sequence GAGEMS.

The protein belongs to the glutamyl-tRNA reductase family. In terms of assembly, homodimer.

The catalysed reaction is (S)-4-amino-5-oxopentanoate + tRNA(Glu) + NADP(+) = L-glutamyl-tRNA(Glu) + NADPH + H(+). It participates in porphyrin-containing compound metabolism; protoporphyrin-IX biosynthesis; 5-aminolevulinate from L-glutamyl-tRNA(Glu): step 1/2. Functionally, catalyzes the NADPH-dependent reduction of glutamyl-tRNA(Glu) to glutamate 1-semialdehyde (GSA). This Campylobacter fetus subsp. fetus (strain 82-40) protein is Glutamyl-tRNA reductase.